The sequence spans 605 residues: MAGLGPTFPLHRLVWANRHRELEAALHSRKHDIEQEDPQGRTPLELAVTLGNLESVRVLLRHNANVGKESHQGWAVLQEAVSTGDPEMVQLVLQYRDFQRATQRLAGIPELLNKLRQAPDFYVEMKWEFTSWVPLVSKMCPSDVYRVWKRGESLRVDTSLLGFEHMTWQRGRRSFIFRGQEAGALVMEVDHDRQVVHTETLAPALHEPEALLAAMRPSEEHVASRLTSPIVSTHLDTRNVAFERNKCGIWGWRSEKMESVSGYEAKVYSATNVELVTRTRTEHLSDQDKLRNKGGKTPFQSFLGMAQQHSSHTLAPVQQAASPTNPTAISAEEYFDPSFSLESRNIGRPIEMSSKVQRFKATLWLSEEHPLSLGDQVTPIIDLMAISNAHFAKLRDFITLRLPPGFPVKIEIPLFHVLNARITFSNLCGCDEPVSSVCVPNSSSAISASGSPFPCEVDPTVFEVPEGYSVLGAERSEPLRDEDDDLLQFAIQQSLLEAGTEAEQVTVWEALTNTRPGIHPPPRVTVFEEQLQLEQALQESLQLSTESRGPESPQKTPPSPAPPSFEEQLRLALELSSREQEELERRGQQEEDDLQRILQLSLTEH.

2 consecutive UIM domains span residues Glu-482–Glu-501 and Glu-528–Ser-547. The segment covering Gln-538 to Gln-554 has biased composition (low complexity). The disordered stretch occupies residues Gln-538 to His-605. Ser-552 bears the Phosphoserine mark. Thr-556 bears the Phosphothreonine mark. Residues Ser-564–Leu-575 are compositionally biased toward low complexity. UIM domains lie at Ser-564 to Leu-583 and Gln-589 to His-605. Over residues Ser-576–Gln-589 the composition is skewed to basic and acidic residues.

Interacts with EGFR (ubiquitinated); the interaction is direct and may regulate EGFR internalization.

It is found in the cell membrane. Its subcellular location is the late endosome. In terms of biological role, ubiquitin-binding protein that specifically recognizes and binds 'Lys-63'-linked ubiquitin. Does not bind 'Lys-48'-linked ubiquitin. Positively regulates the internalization of ligand-activated EGFR by binding to the Ub moiety of ubiquitinated EGFR at the cell membrane. The protein is Ankyrin repeat domain-containing protein 13D (Ankrd13d) of Mus musculus (Mouse).